A 162-amino-acid polypeptide reads, in one-letter code: Endoribonuclease YbeY (162 aa).

Zn(2+) is bound by residues histidine 130, histidine 134, and histidine 140.

The protein belongs to the endoribonuclease YbeY family. Zn(2+) is required as a cofactor.

Its subcellular location is the cytoplasm. Functionally, single strand-specific metallo-endoribonuclease involved in late-stage 70S ribosome quality control and in maturation of the 3' terminus of the 16S rRNA. The chain is Endoribonuclease YbeY from Nitratidesulfovibrio vulgaris (strain ATCC 29579 / DSM 644 / CCUG 34227 / NCIMB 8303 / VKM B-1760 / Hildenborough) (Desulfovibrio vulgaris).